Here is a 120-residue protein sequence, read N- to C-terminus: uncharacterized protein (120 aa).

The N-terminal stretch at 1-16 is a signal peptide; that stretch reads MFKFILLCFCINFAFS.

This is an uncharacterized protein from Acheta domesticus (House cricket).